The sequence spans 276 residues: Phosphonates import ATP-binding protein PhnC (276 aa).

The region spanning 2–246 (LEIHNLQKSY…VLTRIYGAED (245 aa)) is the ABC transporter domain. 35-42 (GPSGAGKS) serves as a coordination point for ATP.

The protein belongs to the ABC transporter superfamily. Phosphonates importer (TC 3.A.1.9.1) family. In terms of assembly, the complex is composed of two ATP-binding proteins (PhnC), two transmembrane proteins (PhnE) and a solute-binding protein (PhnD).

Its subcellular location is the cell inner membrane. The enzyme catalyses phosphonate(out) + ATP + H2O = phosphonate(in) + ADP + phosphate + H(+). Part of the ABC transporter complex PhnCDE involved in phosphonates import. Responsible for energy coupling to the transport system. The sequence is that of Phosphonates import ATP-binding protein PhnC from Alcaligenes faecalis.